A 218-amino-acid chain; its full sequence is Cell division protein SepF (218 aa).

A disordered region spans residues 25–115 (DVAASTDNVI…IANRREQYQQ (91 aa)). Polar residues predominate over residues 29-43 (STDNVIPRSQQSVRA). The span at 47–63 (PKQEPRNNHVQQDHQAR) shows a compositional bias: basic and acidic residues.

The protein belongs to the SepF family. Homodimer. Interacts with FtsZ.

Its subcellular location is the cytoplasm. Its function is as follows. Cell division protein that is part of the divisome complex and is recruited early to the Z-ring. Probably stimulates Z-ring formation, perhaps through the cross-linking of FtsZ protofilaments. Its function overlaps with FtsA. This chain is Cell division protein SepF, found in Streptococcus pyogenes serotype M12 (strain MGAS2096).